A 1030-amino-acid polypeptide reads, in one-letter code: MMS19 nucleotide excision repair protein homolog (1030 aa).

A2 is modified (N-acetylalanine). K496 carries the post-translational modification N6-acetyllysine. 4 HEAT repeats span residues 866–904 (QRFF…RLPK), 908–946 (LPEL…EAPQ), 949–987 (SLHV…LPTP), and 990–1028 (LPYK…LGSP). S1027 is subject to Phosphoserine.

It belongs to the MET18/MMS19 family. As to quaternary structure, component of the CIA complex. In the CIA complex, interacts directly with CIAO2B and CIAO3. Component of the MMXD complex, composed of CIAO1, ERCC2, CIAO2B, MMS19 and SLC25A5. Interacts with CIAO2B; the interaction is direct. Interacts with ERCC2/XPD; the interaction is direct. Interacts with ERCC3/XPB and NCOA3/RAC3. Interacts with RTEL1; the interaction mediates the association of RTEL1 with the CIA complex. Interacts with BRIP1. Interacts with KIF4A; the interaction facilitates the transfer of Fe-S clusters to KIF4A to ensure proper localization of KIF4A to the mitotic machinery components. Interacts with CCDC117; the interaction is indirect. In terms of processing, ubiquitinated; undergoes 'Lys-48'-linked polyubiquitination by MAGEF1-NSMCE1 ubiquitin ligase complex leading to proteasomal degradation. Ubiquitously expressed with higher expression in testis.

It is found in the nucleus. Its subcellular location is the cytoplasm. The protein localises to the cytoskeleton. The protein resides in the spindle. It localises to the microtubule organizing center. It is found in the centrosome. In terms of biological role, key component of the cytosolic iron-sulfur protein assembly (CIA) complex, a multiprotein complex that mediates the incorporation of iron-sulfur cluster into apoproteins specifically involved in DNA metabolism and genomic integrity. In the CIA complex, MMS19 acts as an adapter between early-acting CIA components and a subset of cellular target iron-sulfur proteins such as ERCC2/XPD, FANCJ and RTEL1, thereby playing a key role in nucleotide excision repair (NER), homologous recombination-mediated double-strand break DNA repair, DNA replication and RNA polymerase II (POL II) transcription. As part of the mitotic spindle-associated MMXD complex, plays a role in chromosome segregation, probably by facilitating iron-sulfur (Fe-S) cluster assembly into ERCC2/XPD. Together with CIAO2, facilitates the transfer of Fe-S clusters to the motor protein KIF4A, which ensures proper localization of KIF4A to mitotic machinery components to promote the progression of mitosis. Indirectly acts as a transcriptional coactivator of estrogen receptor (ER), via its role in iron-sulfur insertion into some component of the TFIIH-machinery. The chain is MMS19 nucleotide excision repair protein homolog from Homo sapiens (Human).